We begin with the raw amino-acid sequence, 448 residues long: Probable glycine dehydrogenase (decarboxylating) subunit 1 (448 aa).

It belongs to the GcvP family. N-terminal subunit subfamily. The glycine cleavage system is composed of four proteins: P, T, L and H. In this organism, the P 'protein' is a heterodimer of two subunits.

The catalysed reaction is N(6)-[(R)-lipoyl]-L-lysyl-[glycine-cleavage complex H protein] + glycine + H(+) = N(6)-[(R)-S(8)-aminomethyldihydrolipoyl]-L-lysyl-[glycine-cleavage complex H protein] + CO2. Functionally, the glycine cleavage system catalyzes the degradation of glycine. The P protein binds the alpha-amino group of glycine through its pyridoxal phosphate cofactor; CO(2) is released and the remaining methylamine moiety is then transferred to the lipoamide cofactor of the H protein. The sequence is that of Probable glycine dehydrogenase (decarboxylating) subunit 1 from Bacillus pumilus (strain SAFR-032).